We begin with the raw amino-acid sequence, 375 residues long: Anhydro-N-acetylmuramic acid kinase (375 aa).

Residue 18-25 coordinates ATP; it reads GTSMDGID.

Belongs to the anhydro-N-acetylmuramic acid kinase family.

It carries out the reaction 1,6-anhydro-N-acetyl-beta-muramate + ATP + H2O = N-acetyl-D-muramate 6-phosphate + ADP + H(+). Its pathway is amino-sugar metabolism; 1,6-anhydro-N-acetylmuramate degradation. The protein operates within cell wall biogenesis; peptidoglycan recycling. In terms of biological role, catalyzes the specific phosphorylation of 1,6-anhydro-N-acetylmuramic acid (anhMurNAc) with the simultaneous cleavage of the 1,6-anhydro ring, generating MurNAc-6-P. Is required for the utilization of anhMurNAc either imported from the medium or derived from its own cell wall murein, and thus plays a role in cell wall recycling. This chain is Anhydro-N-acetylmuramic acid kinase, found in Rhodospirillum rubrum (strain ATCC 11170 / ATH 1.1.1 / DSM 467 / LMG 4362 / NCIMB 8255 / S1).